Here is a 152-residue protein sequence, read N- to C-terminus: Clitocypin-2 (152 aa).

The protein belongs to the protease inhibitor I48 family. In terms of assembly, homodimer. In terms of tissue distribution, expressed in all analyzed tissues, but expression was higher in the pileus and in the lower part of the stipe.

Binds and inhibits cysteine proteinases. Inhibits most strongly papain and cathepsin L, more weakly bromelain and cathepsin B while it is completely ineffective against cathepsin H. This is Clitocypin-2 (clt2) from Clitocybe nebularis (Clouded agaric).